The chain runs to 132 residues: Small ribosomal subunit protein uS8 (132 aa).

The protein belongs to the universal ribosomal protein uS8 family. As to quaternary structure, part of the 30S ribosomal subunit. Contacts proteins S5 and S12.

Functionally, one of the primary rRNA binding proteins, it binds directly to 16S rRNA central domain where it helps coordinate assembly of the platform of the 30S subunit. The polypeptide is Small ribosomal subunit protein uS8 (Lactococcus lactis subsp. cremoris (strain MG1363)).